A 165-amino-acid chain; its full sequence is Shikimate kinase (165 aa).

11–16 (GAGKTT) is a binding site for ATP. Thr15 contacts Mg(2+). Substrate-binding residues include Asp33, Arg57, and Gly78. An ATP-binding site is contributed by Arg116. A substrate-binding site is contributed by Arg134.

The protein belongs to the shikimate kinase family. In terms of assembly, monomer. It depends on Mg(2+) as a cofactor.

The protein localises to the cytoplasm. The catalysed reaction is shikimate + ATP = 3-phosphoshikimate + ADP + H(+). It participates in metabolic intermediate biosynthesis; chorismate biosynthesis; chorismate from D-erythrose 4-phosphate and phosphoenolpyruvate: step 5/7. In terms of biological role, catalyzes the specific phosphorylation of the 3-hydroxyl group of shikimic acid using ATP as a cosubstrate. The sequence is that of Shikimate kinase from Bacillus cereus (strain AH187).